Here is a 152-residue protein sequence, read N- to C-terminus: 3-hydroxyacyl-[acyl-carrier-protein] dehydratase FabZ (152 aa).

His57 is a catalytic residue.

The protein belongs to the thioester dehydratase family. FabZ subfamily.

The protein resides in the cytoplasm. It carries out the reaction a (3R)-hydroxyacyl-[ACP] = a (2E)-enoyl-[ACP] + H2O. Involved in unsaturated fatty acids biosynthesis. Catalyzes the dehydration of short chain beta-hydroxyacyl-ACPs and long chain saturated and unsaturated beta-hydroxyacyl-ACPs. The sequence is that of 3-hydroxyacyl-[acyl-carrier-protein] dehydratase FabZ from Pasteurella multocida (strain Pm70).